The following is a 44-amino-acid chain: uncharacterized protein (44 aa).

The first 28 residues, 1-28 (MLRDLGRRVAIAAILSGIILGGMSISLA), serve as a signal peptide directing secretion.

This is an uncharacterized protein from Bacillus subtilis (strain 168).